The chain runs to 1902 residues: Plexin-B3 (1902 aa).

The first 36 residues, 1–36, serve as a signal peptide directing secretion; the sequence is MLTDFLQAPVMAPWSPFSLHLLLLFLPLLPLTRVHR. A Sema domain is found at 37–461; sequence FSVPNTSFNH…TAQQVDRILV (425 aa). At 37 to 1245 the chain is on the extracellular side; it reads FSVPNTSFNH…MMSTFPVEAQ (1209 aa). A glycan (N-linked (GlcNAc...) asparagine) is linked at asparagine 41. Intrachain disulfides connect cysteine 88/cysteine 97 and cysteine 122/cysteine 130. A glycan (N-linked (GlcNAc...) asparagine) is linked at asparagine 221. Intrachain disulfides connect cysteine 257/cysteine 360, cysteine 273/cysteine 305, and cysteine 323/cysteine 347. Residues 353 to 372 are disordered; the sequence is DSPESYPCGDEHTPSPIAGR. 2 N-linked (GlcNAc...) asparagine glycosylation sites follow: asparagine 416 and asparagine 469. One can recognise a PSI 1 domain in the interval 463–515; that stretch reads ACPQFPNCTTCLQARDPLCGWCILQGRCTRRGECGRAAQPNHWLWSYEDNHCP. Cystine bridges form between cysteine 464/cysteine 481, cysteine 470/cysteine 514, cysteine 473/cysteine 490, cysteine 484/cysteine 496, and cysteine 551/cysteine 569. PSI domains are found at residues 609-671 and 776-822; these read DCSA…EACP and DCAM…QLCP. Asparagine 791, asparagine 889, asparagine 910, asparagine 946, asparagine 1090, and asparagine 1207 each carry an N-linked (GlcNAc...) asparagine glycan. 4 consecutive IPT/TIG domains span residues 823-914, 915-1001, 1003-1134, and 1154-1221; these read IPSI…FTYQ, DPVL…FRYT, NPQL…FLYQ, and KPGH…QMGN. Residues 1246–1266 traverse the membrane as a helical segment; it reads LGLGMGAAVLIAAVLLLTLMY. The Cytoplasmic segment spans residues 1267-1902; the sequence is RHKSKKALRD…ALVEYKVTDL (636 aa).

The protein belongs to the plexin family. In terms of assembly, binds MET and MST1R. Interacts with RIT2/RIN. May form homodimers (via Sema domain). Interacts (via cytoplasmic domain) with FSCN1, ARHGDIA and RAC1. In terms of tissue distribution, expressed in brain (at protein level). In cerebellum, strongest expression detected in Purkinje and granular cells. Detected at very low levels in several fetal tissues, including dorsal root ganglia (DRG), heart, lung, optic bulb, brain and liver.

It localises to the cell membrane. In terms of biological role, receptor for SEMA5A that plays a role in axon guidance, invasive growth and cell migration. Stimulates neurite outgrowth and mediates Ca(2+)/Mg(2+)-dependent cell aggregation. In glioma cells, SEMA5A stimulation of PLXNB3 results in the disassembly of F-actin stress fibers, disruption of focal adhesions and cellular collapse as well as inhibition of cell migration and invasion through ARHGDIA-mediated inactivation of RAC1. Seem to be non-essential for normal development and function of the central nervous system. This Mus musculus (Mouse) protein is Plexin-B3 (Plxnb3).